Consider the following 361-residue polypeptide: RLA class I histocompatibility antigen, alpha chain 11/11 (361 aa).

Residues 1–24 (MGSMAPRTLLLLLAGALTLKDTQA) form the signal peptide. The segment at 25–114 (GSHSMRYFYT…ALRYYNQSAA (90 aa)) is alpha-1. Topologically, residues 25 to 308 (GSHSMRYFYT…EPPAQPTALI (284 aa)) are extracellular. Residue N110 is glycosylated (N-linked (GlcNAc...) asparagine). An alpha-2 region spans residues 115-206 (GSHTFQTMFG…EMGKETLQRA (92 aa)). Disulfide bonds link C125/C188 and C227/C283. The segment at 207-298 (DPPKAHVTHH…GLPEPLTLTW (92 aa)) is alpha-3. In terms of domain architecture, Ig-like C1-type spans 209–297 (PKAHVTHHPA…EGLPEPLTLT (89 aa)). The connecting peptide stretch occupies residues 299–308 (EPPAQPTALI). A helical transmembrane segment spans residues 309–329 (VGIVAGVLGVLLILGAVVAVV). The Cytoplasmic portion of the chain corresponds to 330–361 (RRKKHSSDGKGGRYTPAAGGHRDQGSDDSLMP). The tract at residues 335-361 (SSDGKGGRYTPAAGGHRDQGSDDSLMP) is disordered. Phosphoserine occurs at positions 355 and 358.

This sequence belongs to the MHC class I family. Heterodimer of an alpha chain and a beta chain (beta-2-microglobulin).

It localises to the membrane. Its function is as follows. Involved in the presentation of foreign antigens to the immune system. This Oryctolagus cuniculus (Rabbit) protein is RLA class I histocompatibility antigen, alpha chain 11/11.